Reading from the N-terminus, the 340-residue chain is Anthranilate phosphoribosyltransferase (340 aa).

Residues G82, 85 to 86 (GD), T90, 92 to 95 (NIST), 110 to 118 (KHGSRSVSS), and S122 each bind 5-phospho-alpha-D-ribose 1-diphosphate. Anthranilate is bound at residue G82. S94 provides a ligand contact to Mg(2+). Anthranilate is bound at residue R168. Mg(2+) contacts are provided by D227 and E228.

This sequence belongs to the anthranilate phosphoribosyltransferase family. In terms of assembly, homodimer. It depends on Mg(2+) as a cofactor.

The enzyme catalyses N-(5-phospho-beta-D-ribosyl)anthranilate + diphosphate = 5-phospho-alpha-D-ribose 1-diphosphate + anthranilate. Its pathway is amino-acid biosynthesis; L-tryptophan biosynthesis; L-tryptophan from chorismate: step 2/5. Its function is as follows. Catalyzes the transfer of the phosphoribosyl group of 5-phosphorylribose-1-pyrophosphate (PRPP) to anthranilate to yield N-(5'-phosphoribosyl)-anthranilate (PRA). The sequence is that of Anthranilate phosphoribosyltransferase from Hydrogenovibrio crunogenus (strain DSM 25203 / XCL-2) (Thiomicrospira crunogena).